Consider the following 150-residue polypeptide: 1,4-dihydroxy-2-naphthoyl-CoA hydrolase (150 aa).

Residue Asp-19 is part of the active site.

The protein belongs to the 4-hydroxybenzoyl-CoA thioesterase family. DHNA-CoA hydrolase subfamily.

It carries out the reaction 1,4-dihydroxy-2-naphthoyl-CoA + H2O = 1,4-dihydroxy-2-naphthoate + CoA + H(+). The protein operates within cofactor biosynthesis; phylloquinone biosynthesis. It functions in the pathway quinol/quinone metabolism; 1,4-dihydroxy-2-naphthoate biosynthesis; 1,4-dihydroxy-2-naphthoate from chorismate: step 7/7. Functionally, catalyzes the hydrolysis of 1,4-dihydroxy-2-naphthoyl-CoA (DHNA-CoA) to 1,4-dihydroxy-2-naphthoate (DHNA), a reaction involved in phylloquinone (vitamin K1) biosynthesis. This chain is 1,4-dihydroxy-2-naphthoyl-CoA hydrolase, found in Prochlorococcus marinus (strain AS9601).